The following is a 251-amino-acid chain: Prolactin-7C1 (251 aa).

A signal peptide spans M1–S30. A glycan (N-linked (GlcNAc...) asparagine) is linked at N57. Cystine bridges form between C101–C217 and C234–C242.

Belongs to the somatotropin/prolactin family. Expressed exclusively in the placenta. Expressed in spongiotrophoblast cells and trophoblast giant cells of the junctional zone and in labyrinthine trophoblast.

It is found in the secreted. This Mus musculus (Mouse) protein is Prolactin-7C1 (Prl7c1).